The following is a 160-amino-acid chain: Cyclic pyranopterin monophosphate synthase (160 aa).

Substrate is bound by residues 77 to 79 (LCH) and 114 to 115 (ME). Residue Asp129 is part of the active site.

The protein belongs to the MoaC family. In terms of assembly, homohexamer; trimer of dimers.

It catalyses the reaction (8S)-3',8-cyclo-7,8-dihydroguanosine 5'-triphosphate = cyclic pyranopterin phosphate + diphosphate. It participates in cofactor biosynthesis; molybdopterin biosynthesis. Functionally, catalyzes the conversion of (8S)-3',8-cyclo-7,8-dihydroguanosine 5'-triphosphate to cyclic pyranopterin monophosphate (cPMP). The protein is Cyclic pyranopterin monophosphate synthase of Alcanivorax borkumensis (strain ATCC 700651 / DSM 11573 / NCIMB 13689 / SK2).